The sequence spans 450 residues: tRNA modification GTPase MnmE (450 aa).

Arg-24, Glu-82, and Lys-121 together coordinate (6S)-5-formyl-5,6,7,8-tetrahydrofolate. Residues 218 to 375 enclose the TrmE-type G domain; that stretch reads GMHVVLVGQP…LRQVLLEAVG (158 aa). Residue Asn-228 participates in K(+) binding. GTP-binding positions include 228–233, 247–253, 272–275, and 356–358; these read NVGKSS, TDIAGTT, DTAG, and SAR. Ser-232 serves as a coordination point for Mg(2+). The K(+) site is built by Thr-247, Ile-249, and Thr-252. Mg(2+) is bound at residue Thr-253. Lys-450 provides a ligand contact to (6S)-5-formyl-5,6,7,8-tetrahydrofolate.

It belongs to the TRAFAC class TrmE-Era-EngA-EngB-Septin-like GTPase superfamily. TrmE GTPase family. In terms of assembly, homodimer. Heterotetramer of two MnmE and two MnmG subunits. It depends on K(+) as a cofactor.

It localises to the cytoplasm. Its function is as follows. Exhibits a very high intrinsic GTPase hydrolysis rate. Involved in the addition of a carboxymethylaminomethyl (cmnm) group at the wobble position (U34) of certain tRNAs, forming tRNA-cmnm(5)s(2)U34. The sequence is that of tRNA modification GTPase MnmE from Laribacter hongkongensis (strain HLHK9).